A 358-amino-acid chain; its full sequence is Probable cinnamyl alcohol dehydrogenase (358 aa).

Cys-48 is a binding site for Zn(2+). Residue Ser-50 participates in NADP(+) binding. Zn(2+)-binding residues include His-70, Glu-71, Cys-101, Cys-104, Cys-107, Cys-115, and Cys-164. Residues Thr-168, 189–194 (GLGGVG), 212–217 (SSSDKK), Thr-252, Gly-276, and 299–301 (SFV) each bind NADP(+).

The protein belongs to the zinc-containing alcohol dehydrogenase family. As to quaternary structure, homodimer. It depends on Zn(2+) as a cofactor. In terms of tissue distribution, most actively expressed in stem, hypocotyl and root tissue.

The catalysed reaction is (E)-cinnamyl alcohol + NADP(+) = (E)-cinnamaldehyde + NADPH + H(+). The enzyme catalyses (E)-coniferol + NADP(+) = (E)-coniferaldehyde + NADPH + H(+). It catalyses the reaction (E)-sinapyl alcohol + NADP(+) = (E)-sinapaldehyde + NADPH + H(+). It carries out the reaction (E)-4-coumaroyl alcohol + NADP(+) = (E)-4-coumaraldehyde + NADPH + H(+). The catalysed reaction is (E)-caffeyl alcohol + NADP(+) = (E)-caffeyl aldehyde + NADPH + H(+). The protein operates within aromatic compound metabolism; phenylpropanoid biosynthesis. This protein catalyzes the final step in a branch of phenylpropanoid synthesis specific for production of lignin monomers. It acts on coniferyl-, sinapyl-, 4-coumaryl- and cinnamyl-alcohol. The polypeptide is Probable cinnamyl alcohol dehydrogenase (CAD2) (Medicago sativa (Alfalfa)).